A 485-amino-acid chain; its full sequence is Amyloid beta A4 precursor protein-binding family B member 1-interacting protein (485 aa).

Residues 84-107 (QAQKTSGNQQSVVTQPSTGTNNDF) are compositionally biased toward polar residues. Residues 84–157 (QAQKTSGNQQ…LSQEEQEARA (74 aa)) are disordered. Residues 125-147 (LPPPPPAPDLDLPPPPPPPPPEP) show a composition bias toward pro residues. Positions 175 to 262 (KKLVVKVHMY…KVLFLEKKEK (88 aa)) constitute a Ras-associating domain. In terms of domain architecture, PH spans 305-414 (VPELEGALYL…WVTGIRIAKY (110 aa)).

This sequence belongs to the MRL family.

It localises to the cell membrane. The protein localises to the cytoplasm. Its subcellular location is the cytoskeleton. In terms of biological role, appears to function in the signal transduction from Ras activation to actin cytoskeletal remodeling. This is Amyloid beta A4 precursor protein-binding family B member 1-interacting protein (APBB1IP) from Gallus gallus (Chicken).